Here is a 335-residue protein sequence, read N- to C-terminus: UPF0353 protein MT1528 (335 aa).

A run of 2 helical transmembrane segments spans residues Trp18–Leu38 and Val67–Thr87. The VWFA domain maps to Val98–Leu294. Residues Val309–Ile329 form a helical membrane-spanning segment.

It belongs to the UPF0353 family.

The protein localises to the cell membrane. The sequence is that of UPF0353 protein MT1528 from Mycobacterium tuberculosis (strain CDC 1551 / Oshkosh).